We begin with the raw amino-acid sequence, 459 residues long: Putrescine aminotransferase (459 aa).

Pyridoxal 5'-phosphate is bound by residues 150-151 and glutamine 274; that span reads GT. Lysine 300 carries the post-translational modification N6-(pyridoxal phosphate)lysine. Residue threonine 332 coordinates pyridoxal 5'-phosphate.

It belongs to the class-III pyridoxal-phosphate-dependent aminotransferase family. Putrescine aminotransferase subfamily. It depends on pyridoxal 5'-phosphate as a cofactor.

The enzyme catalyses an alkane-alpha,omega-diamine + 2-oxoglutarate = an omega-aminoaldehyde + L-glutamate. The catalysed reaction is putrescine + 2-oxoglutarate = 1-pyrroline + L-glutamate + H2O. It carries out the reaction cadaverine + 2-oxoglutarate = 5-aminopentanal + L-glutamate. The protein operates within amine and polyamine degradation; putrescine degradation; 4-aminobutanal from putrescine (transaminase route): step 1/1. Functionally, catalyzes the aminotransferase reaction from putrescine to 2-oxoglutarate, leading to glutamate and 4-aminobutanal, which spontaneously cyclizes to form 1-pyrroline. This is the first step in one of two pathways for putrescine degradation, where putrescine is converted into 4-aminobutanoate (gamma-aminobutyrate or GABA) via 4-aminobutanal. Also functions as a cadaverine transaminase in a a L-lysine degradation pathway to succinate that proceeds via cadaverine, glutarate and L-2-hydroxyglutarate. The protein is Putrescine aminotransferase of Escherichia coli O8 (strain IAI1).